Reading from the N-terminus, the 267-residue chain is Glutamate racemase (267 aa).

Residues 10 to 11 and 42 to 43 contribute to the substrate site; these read DS and YG. Cys-73 functions as the Proton donor/acceptor in the catalytic mechanism. Position 74 to 75 (74 to 75) interacts with substrate; sequence NT. The Proton donor/acceptor role is filled by Cys-183. 184–185 serves as a coordination point for substrate; it reads TH.

This sequence belongs to the aspartate/glutamate racemases family.

It catalyses the reaction L-glutamate = D-glutamate. It functions in the pathway cell wall biogenesis; peptidoglycan biosynthesis. In terms of biological role, provides the (R)-glutamate required for cell wall biosynthesis. This Lactobacillus helveticus (strain DPC 4571) protein is Glutamate racemase.